A 314-amino-acid chain; its full sequence is uncharacterized protein (314 aa).

A mitochondrion-targeting transit peptide spans 1 to 29; it reads MMRLIRTLPLRCFKTRIRRQGSLLCLRCF. Residues 52–74 form a disordered region; it reads SSSPLSKNKEKQEKPEKENEGKH. Residues 58–74 show a composition bias toward basic and acidic residues; it reads KNKEKQEKPEKENEGKH. The stretch at 177–207 forms a coiled coil; the sequence is LNEHHLQLLKLKRELNSIHDELNEIIIDLLQ. Residues 262 to 279 traverse the membrane as a helical segment; that stretch reads GLLVILVLVCSIMIGVSA. The segment at 281 to 314 is disordered; it reads KKERPGLQEPEEPEILAPKEDIDTTFPQDQHDID.

The protein resides in the mitochondrion membrane. This is an uncharacterized protein from Saccharomyces cerevisiae (strain ATCC 204508 / S288c) (Baker's yeast).